Reading from the N-terminus, the 1124-residue chain is uncharacterized protein (1124 aa).

A signal peptide spans 1 to 28 (MALFPRSILIALVLSFVLNLGLVTKIHA). 7 consecutive transmembrane segments (helical) span residues 332-352 (IVTA…LLAG), 359-379 (EYIN…GINI), 393-413 (MIQW…SWVM), 495-515 (MLVS…AFMV), 522-542 (MISI…FLFA), 555-575 (MISF…MFAV), and 700-720 (IKNI…MYNF).

It belongs to the TrbL/VirB6 family.

Its subcellular location is the cell membrane. This is an uncharacterized protein from Rickettsia prowazekii (strain Madrid E).